Consider the following 465-residue polypeptide: Cysteine--tRNA ligase (465 aa).

Residue cysteine 27 coordinates Zn(2+). The 'HIGH' region motif lies at 29 to 39; it reads PTVYDFIHIGN. Cysteine 207, histidine 232, and glutamate 236 together coordinate Zn(2+). Residues 264–268 carry the 'KMSKS' region motif; the sequence is KMSKS. Lysine 267 serves as a coordination point for ATP.

The protein belongs to the class-I aminoacyl-tRNA synthetase family. As to quaternary structure, monomer. Zn(2+) serves as cofactor.

The protein resides in the cytoplasm. It carries out the reaction tRNA(Cys) + L-cysteine + ATP = L-cysteinyl-tRNA(Cys) + AMP + diphosphate. This is Cysteine--tRNA ligase from Caldicellulosiruptor saccharolyticus (strain ATCC 43494 / DSM 8903 / Tp8T 6331).